The primary structure comprises 299 residues: Putative ankyrin repeat protein R864 (299 aa).

7 ANK repeats span residues 78–107 (SLNKCLLDSCNKGQLKIVQHLINIGANIES), 108–137 (NNNYAVLLASGGGHLEVVKYLVSQGANIKS), 139–167 (NNRVVGWASQHGRLEVVKYLVSLGADIRS), 168–197 (NDDYAVRWASEHGHLEVAKYLVSLGADIRS), 199–227 (YYYILCGASQNGYLEIIKYIVSLGADIRA), 228–257 (YNNCAVKWASQCGHIDIVKYLASQGADIRN), and 258–287 (DNDYCVGLASKNGHIEVVKYLVSQGADIKT).

This Acanthamoeba polyphaga mimivirus (APMV) protein is Putative ankyrin repeat protein R864.